We begin with the raw amino-acid sequence, 66 residues long: uncharacterized protein (66 aa).

This is an uncharacterized protein from Schizosaccharomyces pombe (strain 972 / ATCC 24843) (Fission yeast).